Here is a 37-residue protein sequence, read N- to C-terminus: Large ribosomal subunit protein bL36 (37 aa).

This sequence belongs to the bacterial ribosomal protein bL36 family.

The chain is Large ribosomal subunit protein bL36 from Variovorax paradoxus (strain S110).